Reading from the N-terminus, the 471-residue chain is ATP synthase subunit beta (471 aa).

153–160 (GGAGVGKT) provides a ligand contact to ATP.

It belongs to the ATPase alpha/beta chains family. In terms of assembly, F-type ATPases have 2 components, CF(1) - the catalytic core - and CF(0) - the membrane proton channel. CF(1) has five subunits: alpha(3), beta(3), gamma(1), delta(1), epsilon(1). CF(0) has four main subunits: a(1), b(1), b'(1) and c(9-12).

The protein resides in the cell inner membrane. It carries out the reaction ATP + H2O + 4 H(+)(in) = ADP + phosphate + 5 H(+)(out). In terms of biological role, produces ATP from ADP in the presence of a proton gradient across the membrane. The catalytic sites are hosted primarily by the beta subunits. The chain is ATP synthase subunit beta from Methylibium petroleiphilum (strain ATCC BAA-1232 / LMG 22953 / PM1).